The chain runs to 114 residues: Nascent polypeptide-associated complex protein (114 aa).

The NAC-A/B domain maps to 5-69 (PSQFKNLERM…AKEAQKEEPK (65 aa)).

It belongs to the NAC-alpha family. Homodimer. Interacts with the ribosome. Binds ribosomal RNA.

Contacts the emerging nascent chain on the ribosome. This Sulfurisphaera tokodaii (strain DSM 16993 / JCM 10545 / NBRC 100140 / 7) (Sulfolobus tokodaii) protein is Nascent polypeptide-associated complex protein.